Reading from the N-terminus, the 365-residue chain is Putative tRNA 2'-phosphotransferase (365 aa).

Disordered regions lie at residues 1 to 35 (MYKNMNSHELIEESNNSGTPATKSSSKPTKKIRPR) and 231 to 254 (LLDAKASPKNNRSDESDQSDPESI). A compositionally biased stretch (low complexity) spans 17–27 (SGTPATKSSSK).

Belongs to the KptA/TPT1 family.

It carries out the reaction 2'-phospho-[ligated tRNA] + NAD(+) = mature tRNA + ADP-alpha-D-ribose 1'',2''-cyclic phosphate + nicotinamide. In terms of biological role, catalyzes the last step of tRNA splicing, the transfer of the splice junction 2'-phosphate from ligated tRNA to NAD to produce ADP-ribose 1''-2'' cyclic phosphate. The sequence is that of Putative tRNA 2'-phosphotransferase from Schizosaccharomyces pombe (strain 972 / ATCC 24843) (Fission yeast).